A 115-amino-acid polypeptide reads, in one-letter code: Ribonuclease P protein component (115 aa).

This sequence belongs to the RnpA family. As to quaternary structure, consists of a catalytic RNA component (M1 or rnpB) and a protein subunit.

The catalysed reaction is Endonucleolytic cleavage of RNA, removing 5'-extranucleotides from tRNA precursor.. Functionally, RNaseP catalyzes the removal of the 5'-leader sequence from pre-tRNA to produce the mature 5'-terminus. It can also cleave other RNA substrates such as 4.5S RNA. The protein component plays an auxiliary but essential role in vivo by binding to the 5'-leader sequence and broadening the substrate specificity of the ribozyme. This is Ribonuclease P protein component from Natranaerobius thermophilus (strain ATCC BAA-1301 / DSM 18059 / JW/NM-WN-LF).